The chain runs to 270 residues: 4-hydroxy-tetrahydrodipicolinate reductase (270 aa).

NAD(+)-binding positions include 11-16 (GAGGRM) and glutamate 37. Arginine 38 contacts NADP(+). Residues 101 to 103 (GTT) and 125 to 128 (APNM) each bind NAD(+). Histidine 158 serves as the catalytic Proton donor/acceptor. Histidine 159 provides a ligand contact to (S)-2,3,4,5-tetrahydrodipicolinate. The active-site Proton donor is the lysine 162. Residue 168-169 (GT) participates in (S)-2,3,4,5-tetrahydrodipicolinate binding.

Belongs to the DapB family.

The protein localises to the cytoplasm. The catalysed reaction is (S)-2,3,4,5-tetrahydrodipicolinate + NAD(+) + H2O = (2S,4S)-4-hydroxy-2,3,4,5-tetrahydrodipicolinate + NADH + H(+). It carries out the reaction (S)-2,3,4,5-tetrahydrodipicolinate + NADP(+) + H2O = (2S,4S)-4-hydroxy-2,3,4,5-tetrahydrodipicolinate + NADPH + H(+). The protein operates within amino-acid biosynthesis; L-lysine biosynthesis via DAP pathway; (S)-tetrahydrodipicolinate from L-aspartate: step 4/4. Its function is as follows. Catalyzes the conversion of 4-hydroxy-tetrahydrodipicolinate (HTPA) to tetrahydrodipicolinate. The sequence is that of 4-hydroxy-tetrahydrodipicolinate reductase from Shewanella sp. (strain ANA-3).